The chain runs to 993 residues: Ephrin type-B receptor 3 (993 aa).

A signal peptide spans 1 to 29; it reads MAGARPPPGLLPLLAPLLLPLLLPAGCWA. At 30-554 the chain is on the extracellular side; the sequence is LEETLMDTKW…AQQLQEQLPL (525 aa). The 179-residue stretch at 31-209 folds into the Eph LBD domain; it reads EETLMDTKWV…FYKKCASTTA (179 aa). C73 and C191 form a disulfide bridge. Fibronectin type-III domains lie at 331-446 and 447-540; these read VPSP…TNQA and APSE…TTSE. N-linked (GlcNAc...) asparagine glycans are attached at residues N343 and N440. A helical transmembrane segment spans residues 555–575; the sequence is IVGSTVAGFVFMVVVVVIALV. Residues 576 to 993 lie on the Cytoplasmic side of the membrane; sequence CLRKQRHGPD…QMNQTLPVQV (418 aa). Residue Y609 is modified to Phosphotyrosine; by autocatalysis. The Protein kinase domain occupies 628 to 891; that stretch reads VKIEEVIGAG…QIVNTLDKLI (264 aa). ATP contacts are provided by residues 634 to 642 and K660; that span reads IGAGEFGEV. Residue D753 is the Proton acceptor of the active site. Residues 920-984 enclose the SAM domain; the sequence is TTFTTVGDWL…LCSIQDMRLQ (65 aa). Positions 991–993 match the PDZ-binding motif; that stretch reads VQV.

This sequence belongs to the protein kinase superfamily. Tyr protein kinase family. Ephrin receptor subfamily. As to quaternary structure, heterotetramer upon binding of the ligand. The heterotetramer is composed of an ephrin dimer and a receptor dimer. Oligomerization is probably required to induce biological responses. Post-translationally, phosphorylated. Autophosphorylates upon ligand-binding. Autophosphorylation on Tyr-609 is required for interaction with SH2 domain-containing proteins. In terms of processing, ubiquitinated by RNF186, mainly through 'Lys-48' and 'Lys-63'-linked polyubiquitin chains. In terms of tissue distribution, expressed in cells of the retinal ganglion cell layer during retinal axon guidance to the optic disk. Expressed by Paneth and progenitor cells in the crypts of the intestinal epithelium (at protein level). Expressed in myogenic progenitor cells.

The protein resides in the cell membrane. Its subcellular location is the cell projection. It localises to the dendrite. The enzyme catalyses L-tyrosyl-[protein] + ATP = O-phospho-L-tyrosyl-[protein] + ADP + H(+). Functionally, receptor tyrosine kinase which binds promiscuously transmembrane ephrin-B family ligands residing on adjacent cells, leading to contact-dependent bidirectional signaling into neighboring cells. The signaling pathway downstream of the receptor is referred to as forward signaling while the signaling pathway downstream of the ephrin ligand is referred to as reverse signaling. Generally has an overlapping and redundant function with EPHB2. Like EPHB2, functions in axon guidance during development regulating for instance the neurons forming the corpus callosum and the anterior commissure, 2 major interhemispheric connections between the temporal lobes of the cerebral cortex. In addition to its role in axon guidance also plays an important redundant role with other ephrin-B receptors in development and maturation of dendritic spines and the formation of excitatory synapses. Controls other aspects of development through regulation of cell migration and positioning. This includes angiogenesis, palate development and thymic epithelium development for instance. Forward and reverse signaling through the EFNB2/EPHB3 complex also regulate migration and adhesion of cells that tubularize the urethra and septate the cloaca. Finally, plays an important role in intestinal epithelium differentiation segregating progenitor from differentiated cells in the crypt. The polypeptide is Ephrin type-B receptor 3 (Ephb3) (Mus musculus (Mouse)).